Reading from the N-terminus, the 348-residue chain is Phospho-2-dehydro-3-deoxyheptonate aldolase, Trp-sensitive (348 aa).

This sequence belongs to the class-I DAHP synthase family.

It carries out the reaction D-erythrose 4-phosphate + phosphoenolpyruvate + H2O = 7-phospho-2-dehydro-3-deoxy-D-arabino-heptonate + phosphate. The protein operates within metabolic intermediate biosynthesis; chorismate biosynthesis; chorismate from D-erythrose 4-phosphate and phosphoenolpyruvate: step 1/7. Stereospecific condensation of phosphoenolpyruvate (PEP) and D-erythrose-4-phosphate (E4P) giving rise to 3-deoxy-D-arabino-heptulosonate-7-phosphate (DAHP). In Shigella flexneri, this protein is Phospho-2-dehydro-3-deoxyheptonate aldolase, Trp-sensitive (aroH).